Consider the following 241-residue polypeptide: Small ribosomal subunit protein uS2 (241 aa).

It belongs to the universal ribosomal protein uS2 family.

The protein is Small ribosomal subunit protein uS2 of Enterobacter sp. (strain 638).